A 698-amino-acid polypeptide reads, in one-letter code: Iron-sulfur clusters transporter ATM1, mitochondrial (698 aa).

Residues 1-23 (MIPQLLQRSSRACPRYNPALYRL) constitute a mitochondrion transit peptide. The Mitochondrial matrix portion of the chain corresponds to 24–113 (STTSQQRPGL…PKDDWGTKLR (90 aa)). The interval 32 to 63 (GLTQTFWTSAPRREQPRTPTDSKPTTTKPSAV) is disordered. The span at 48 to 61 (RTPTDSKPTTTKPS) shows a compositional bias: low complexity. A helical membrane pass occupies residues 114–135 (VSLAVSLLIGAKVLNVQVPFYF). Residues 114–404 (VSLAVSLLIG…LGSVYRELRQ (291 aa)) enclose the ABC transmembrane type-1 domain. Residues 136-158 (KSIVDSMNIDVAAVGGTATTVAG) lie on the Mitochondrial intermembrane side of the membrane. The helical transmembrane segment at 159 to 182 (AMILAYGASRIGATVFQELRNAVF) threads the bilayer. Residues 183–231 (ASVAQNAIRKVACNVFDHLLRLDLTFHLSKQTGGLTRALDRGTKGISFI) are Mitochondrial matrix-facing. The chain crosses the membrane as a helical span at residues 232 to 255 (LSSMVFHVLPTALEISMVCGILTY). A topological domain (mitochondrial intermembrane) is located at residue asparagine 256. The helical transmembrane segment at 257-277 (YGAKFAALTVLTMVSYTAFTI) threads the bilayer. At 278 to 343 (WTTAWRTKFR…NSIKVATSLA (66 aa)) the chain is on the mitochondrial matrix side. Glutathione contacts are provided by residues 283–287 (RTKFR) and 346–349 (NSGQ). The helical transmembrane segment at 344–362 (LLNSGQNIIFSSALTGMMY) threads the bilayer. The Mitochondrial intermembrane segment spans residues 363–377 (LAANGVAEGTLTVGD). A helical membrane pass occupies residues 378 to 399 (LVMVNQLVFQLSVPLNFLGSVY). Glycine 396 serves as a coordination point for glutathione. Residues 400–698 (RELRQSLLDM…EEENDEQKKN (299 aa)) are Mitochondrial matrix-facing. One can recognise an ABC transporter domain in the interval 439 to 675 (IKFENVNFAY…DGVYAELWSA (237 aa)). Residues tyrosine 448 and 472-483 (GPSGCGKSTLLR) contribute to the ATP site. The segment at 679–698 (MFGEDGKEKSEEENDEQKKN) is disordered. The segment covering 682-698 (EDGKEKSEEENDEQKKN) has biased composition (basic and acidic residues).

The protein belongs to the ABC transporter superfamily. ABCB family. Heavy Metal importer (TC 3.A.1.210) subfamily. As to quaternary structure, homodimer.

It localises to the mitochondrion inner membrane. In terms of biological role, performs an essential function in the generation of cytoplasmic iron-sulfur proteins by mediating the ATP-dependent export of Fe/S cluster precursors synthesized by NFS1 and other mitochondrial proteins. Hydrolyzes ATP. Binds glutathione and may function by transporting a glutathione-conjugated iron-sulfur compound. This Gibberella zeae (strain ATCC MYA-4620 / CBS 123657 / FGSC 9075 / NRRL 31084 / PH-1) (Wheat head blight fungus) protein is Iron-sulfur clusters transporter ATM1, mitochondrial.